The primary structure comprises 601 residues: Casbene synthase, chloroplastic (601 aa).

The transit peptide at 1–56 (MALPSAAMQSNPEKLNLFHRLSSLPTTSLEYGNNRFPFFSSSAKSHFKKPTQACLS) directs the protein to the chloroplast. Residues aspartate 355, aspartate 359, asparagine 499, serine 503, and glutamate 507 each coordinate Mg(2+). The DDXXD motif motif lies at 355–359 (DDTID).

It belongs to the terpene synthase family. It depends on Mg(2+) as a cofactor.

Its subcellular location is the plastid. It is found in the chloroplast. The catalysed reaction is (2E,6E,10E)-geranylgeranyl diphosphate = casbene + diphosphate. Its function is as follows. Catalyzes the cyclization of geranylgeranyl diphosphate to casbene, a diterpene phytoalexin with antibacterial and antifungal activity. The chain is Casbene synthase, chloroplastic from Ricinus communis (Castor bean).